A 343-amino-acid chain; its full sequence is Delta(1)-pyrroline-2-carboxylate/Delta(1)-piperideine-2-carboxylate reductase (343 aa).

Ser-53 functions as the Charge relay system in the catalytic mechanism. His-54 serves as the catalytic Proton donor. Arg-58 contacts substrate. 126-130 lines the NADP(+) pocket; that stretch reads HFAAL. Substrate is bound at residue Thr-166. Residue 184-186 participates in NADP(+) binding; that stretch reads DLA. 192–193 contacts substrate; that stretch reads HG. Asp-194 (charge relay system) is an active-site residue. NADP(+) contacts are provided by residues 236 to 237 and 309 to 315; these read HK and RLPGDRR.

This sequence belongs to the LDH2/MDH2 oxidoreductase family. As to quaternary structure, homodimer.

The enzyme catalyses L-pipecolate + NADP(+) = Delta(1)-piperideine-2-carboxylate + NADPH + H(+). It catalyses the reaction L-proline + NADP(+) = 1-pyrroline-2-carboxylate + NADPH + H(+). The catalysed reaction is N-methyl-L-alanine + NADP(+) + H2O = methylamine + pyruvate + NADPH + H(+). Its activity is regulated as follows. Is inhibited by the substrate analog pyrrole-2-carboxylate, and by 2-picolinate. Its function is as follows. Catalyzes the reduction of both Delta(1)-pyrroline-2-carboxylate (Pyr2C) and Delta(1)-piperideine-2-carboxylate (Pip2C) to L-proline and L-pipecolate, respectively, using NADPH as the electron donor. Can catalyze the reverse oxidation reactions, albeit at a much lower rate. Is also able to catalyze in vitro the NADPH-dependent formation of N-methylalanine from pyruvate and N-methylamine; can act on other alpha-keto acids and specifically uses methylamine and not ammonia for these reductive amination reactions. Can use NADH instead of NADPH, although with much less efficiency. The protein is Delta(1)-pyrroline-2-carboxylate/Delta(1)-piperideine-2-carboxylate reductase of Pseudomonas syringae pv. tomato.